A 111-amino-acid chain; its full sequence is Disintegrin CV-11-alpha (111 aa).

Residues 1–20 form the signal peptide; it reads MIQVLLVIICLAVFPYQGSS. The propeptide occupies 21 to 46; sequence IILESGNVNDFELVYPKKVTVLPTGA. The Disintegrin domain maps to 47–111; the sequence is MNSAHPCCDP…SDCPRNPWKD (65 aa). 4 disulfide bridges follow: C53–C76, C67–C73, C72–C97, and C85–C104. The short motif at 89–91 is the Cell attachment site element; that stretch reads KGD.

It belongs to the disintegrin family. Dimeric disintegrin subfamily. In terms of assembly, heterodimer with subunit beta; disulfide-linked. As to expression, expressed by the venom gland.

Its subcellular location is the secreted. Its function is as follows. Inhibits ADP-induced human platelet aggregation. Antagonist of alpha-IIb/beta-3 (ITGA2B/ITGB3). This chain is Disintegrin CV-11-alpha, found in Cerastes vipera (Sahara sand viper).